A 636-amino-acid chain; its full sequence is p-hydroxybenzoate-m-hydroxylase (636 aa).

Residues 11 to 40 (DIVIVGAGPVGILLSLCMSRWGYKVKHIDN), 242 to 244 (RLY), Tyr290, and Asp311 contribute to the FAD site. The helical transmembrane segment at 12 to 33 (IVIVGAGPVGILLSLCMSRWGY) threads the bilayer. Residue Asn573 is glycosylated (N-linked (GlcNAc...) asparagine).

The protein belongs to the PheA/TfdB FAD monooxygenase family. Requires FAD as cofactor.

The protein resides in the membrane. It carries out the reaction 4-hydroxybenzoate + NADH + O2 + H(+) = 3,4-dihydroxybenzoate + NAD(+) + H2O. It catalyses the reaction 4-hydroxybenzoate + NADPH + O2 + H(+) = 3,4-dihydroxybenzoate + NADP(+) + H2O. Functionally, FAD-dependent monooxygenase; part of the benzoic acid degradation pathway also known as the protocatechuic acid pathway. Benzoic acid debradation begins with the conversion of benzoic acid into 4-hydroxybenzoic acid through hydroxylation by the benzoate-4-monooxygenase bphA, and its partner NADPH-cytochrome P450 reductase cprA which act as a mediator in electron donation from NADPH. 4-Hydroxybenzoic acid is then converted into 3,4-dihydroxybenzoic acid (also called protocatechuic acid) by the p-hydroxybenzoate-m-hydroxylase phhA. Protocatechuic acid is converted into 3-carboxy-cis,cis-muconic acid by the intradiol ring-cleavage dioxygenase prcA, which is further metabolized through the 3-oxoadipate pathway to finally enter the tricarboxylic acid cycle (TCA). This chain is p-hydroxybenzoate-m-hydroxylase, found in Emericella nidulans (strain FGSC A4 / ATCC 38163 / CBS 112.46 / NRRL 194 / M139) (Aspergillus nidulans).